Reading from the N-terminus, the 152-residue chain is Transcriptional regulator MraZ (152 aa).

SpoVT-AbrB domains are found at residues 5-52 and 81-124; these read ASAI…PLHE and AHEV…DEQA.

The protein belongs to the MraZ family. In terms of assembly, forms oligomers.

It localises to the cytoplasm. It is found in the nucleoid. The chain is Transcriptional regulator MraZ from Shewanella sp. (strain MR-7).